The following is a 315-amino-acid chain: Ribose-phosphate pyrophosphokinase (315 aa).

Residues 40 to 42 (DGE) and 99 to 100 (RQ) each bind ATP. Mg(2+) contacts are provided by His-133 and Asp-175. Lys-198 is a catalytic residue. D-ribose 5-phosphate-binding positions include Arg-200, Asp-224, and 228–232 (DTAHS).

This sequence belongs to the ribose-phosphate pyrophosphokinase family. Class I subfamily. As to quaternary structure, homohexamer. The cofactor is Mg(2+).

The protein resides in the cytoplasm. It carries out the reaction D-ribose 5-phosphate + ATP = 5-phospho-alpha-D-ribose 1-diphosphate + AMP + H(+). It functions in the pathway metabolic intermediate biosynthesis; 5-phospho-alpha-D-ribose 1-diphosphate biosynthesis; 5-phospho-alpha-D-ribose 1-diphosphate from D-ribose 5-phosphate (route I): step 1/1. Involved in the biosynthesis of the central metabolite phospho-alpha-D-ribosyl-1-pyrophosphate (PRPP) via the transfer of pyrophosphoryl group from ATP to 1-hydroxyl of ribose-5-phosphate (Rib-5-P). This Thermotoga maritima (strain ATCC 43589 / DSM 3109 / JCM 10099 / NBRC 100826 / MSB8) protein is Ribose-phosphate pyrophosphokinase.